We begin with the raw amino-acid sequence, 228 residues long: Lipoprotein-releasing system ATP-binding protein LolD (228 aa).

The region spanning 5–228 is the ABC transporter domain; the sequence is FALSAISKSF…SGTLQNYTDY (224 aa). 40-47 contributes to the ATP binding site; sequence GPSGSGKS.

It belongs to the ABC transporter superfamily. Lipoprotein translocase (TC 3.A.1.125) family. The complex is composed of two ATP-binding proteins (LolD) and two transmembrane proteins (LolC and LolE).

It is found in the cell inner membrane. Its function is as follows. Part of the ABC transporter complex LolCDE involved in the translocation of mature outer membrane-directed lipoproteins, from the inner membrane to the periplasmic chaperone, LolA. Responsible for the formation of the LolA-lipoprotein complex in an ATP-dependent manner. In Ehrlichia ruminantium (strain Gardel), this protein is Lipoprotein-releasing system ATP-binding protein LolD.